A 675-amino-acid polypeptide reads, in one-letter code: Alpha-1,4-glucan:maltose-1-phosphate maltosyltransferase 1 (675 aa).

Alpha-maltose 1-phosphate is bound by residues K264, Q324, and D359. Residue D394 is the Nucleophile of the active site. Residue N395 participates in alpha-maltose 1-phosphate binding. E423 (proton donor) is an active-site residue. Position 534-535 (534-535 (KY)) interacts with alpha-maltose 1-phosphate.

The protein belongs to the glycosyl hydrolase 13 family. GlgE subfamily. As to quaternary structure, homodimer.

The catalysed reaction is alpha-maltose 1-phosphate + [(1-&gt;4)-alpha-D-glucosyl](n) = [(1-&gt;4)-alpha-D-glucosyl](n+2) + phosphate. Is competitively inhibited by alpha-, beta- and gamma-cyclodextrins (cyclic maltooligosaccharides), unlike GlgE from M.tuberculosis. Functionally, maltosyltransferase that uses maltose 1-phosphate (M1P) as the sugar donor to elongate linear or branched alpha-(1-&gt;4)-glucans. Maltooligosaccharides with a degree of polymerization (DP) superior or equal to 4 are efficient acceptors, with DP6 being optimal in the GlgE-catalyzed polymerization with M1P. Is specific for the alpha-anomer of M1P as substrate, since the beta-anomer of M1P gives no activity. Alpha-D-glucose 1-phosphate cannot serve as a donor substrate, but alpha-maltosyl fluoride is an efficient donor in vitro. Exhibits an alpha-retaining catalytic mechanism, with evidence that maltooligosaccharide acceptors are extended at their non-reducing ends. Is also able to catalyze the reverse reaction in vitro, releasing M1P from glycogen or maltoheptaose in the presence of inorganic phosphate. Also catalyzes disproportionation reactions through maltosyl transfer between maltooligosaccharides. Is probably involved in a branched alpha-glucan biosynthetic pathway from trehalose, together with TreS, Mak and GlgB. The sequence is that of Alpha-1,4-glucan:maltose-1-phosphate maltosyltransferase 1 (glgE1) from Streptomyces coelicolor (strain ATCC BAA-471 / A3(2) / M145).